Reading from the N-terminus, the 155-residue chain is Cytochrome c-type biogenesis protein CcmE (155 aa).

Over 1 to 8 (MNPVRKKR) the chain is Cytoplasmic. Residues 9 to 29 (LFIVLAILAGVGIAVALALSA) traverse the membrane as a helical; Signal-anchor for type II membrane protein segment. Topologically, residues 30 to 155 (LQQNINLFYT…YEGGKQEYAK (126 aa)) are periplasmic. Residues H124 and Y128 each contribute to the heme site.

The protein belongs to the CcmE/CycJ family.

It localises to the cell inner membrane. Its function is as follows. Heme chaperone required for the biogenesis of c-type cytochromes. Transiently binds heme delivered by CcmC and transfers the heme to apo-cytochromes in a process facilitated by CcmF and CcmH. In Stutzerimonas stutzeri (strain A1501) (Pseudomonas stutzeri), this protein is Cytochrome c-type biogenesis protein CcmE.